A 388-amino-acid chain; its full sequence is S-adenosylmethionine synthase (388 aa).

Position 16 (His-16) interacts with ATP. Asp-18 lines the Mg(2+) pocket. Glu-44 is a binding site for K(+). 2 residues coordinate L-methionine: Glu-57 and Gln-100. The segment at 100-110 (QSPDIAQGVDK) is flexible loop. ATP is bound by residues 167-169 (DAK), 233-234 (RF), Asp-242, 248-249 (RK), Ala-265, and Lys-269. Asp-242 is a binding site for L-methionine. Position 273 (Lys-273) interacts with L-methionine.

Belongs to the AdoMet synthase family. In terms of assembly, homotetramer; dimer of dimers. Mg(2+) serves as cofactor. The cofactor is K(+).

It is found in the cytoplasm. The catalysed reaction is L-methionine + ATP + H2O = S-adenosyl-L-methionine + phosphate + diphosphate. It functions in the pathway amino-acid biosynthesis; S-adenosyl-L-methionine biosynthesis; S-adenosyl-L-methionine from L-methionine: step 1/1. Its function is as follows. Catalyzes the formation of S-adenosylmethionine (AdoMet) from methionine and ATP. The overall synthetic reaction is composed of two sequential steps, AdoMet formation and the subsequent tripolyphosphate hydrolysis which occurs prior to release of AdoMet from the enzyme. This chain is S-adenosylmethionine synthase, found in Polynucleobacter asymbioticus (strain DSM 18221 / CIP 109841 / QLW-P1DMWA-1) (Polynucleobacter necessarius subsp. asymbioticus).